Here is a 355-residue protein sequence, read N- to C-terminus: Squamosa promoter-binding protein-like 15 (355 aa).

The segment at 1 to 27 is disordered; the sequence is MELLKGSGLNQTESGGSSSTESSSLSG. Residues 12–27 are compositionally biased toward low complexity; it reads TESGGSSSTESSSLSG. The SBP-type zinc finger occupies 61-138; the sequence is TARCQVEGCR…ACHNERRRKP (78 aa). Residues Cys64, Cys69, Cys86, His89, Cys105, Cys108, His112, and Cys124 each coordinate Zn(2+). A Bipartite nuclear localization signal motif is present at residues 121-137; the sequence is KRSCRRRLACHNERRRK.

The protein resides in the nucleus. Functionally, probable transcription factor required for the flowering response to vernalization in the shoot apical meristem (SAM). Defines the competence of shoot meristems to flower in response to vernalization in perennials. The protein is Squamosa promoter-binding protein-like 15 of Arabis alpina (Alpine rock-cress).